Consider the following 741-residue polypeptide: Phage T7 exclusion protein (741 aa).

One can recognise a KAP NTPase domain in the interval 27–334; sequence FGNIAENISR…NSLIFLYPGM (308 aa).

Responsible for the exclusion of phage T7 by plasmid F. Growth of bacteriophage T7 is inhibited in cells of E.coli that carries the plasmid F. This Escherichia coli (strain K12) protein is Phage T7 exclusion protein (pifA).